The chain runs to 460 residues: Proline--tRNA ligase (460 aa).

Belongs to the class-II aminoacyl-tRNA synthetase family. ProS type 3 subfamily. In terms of assembly, homodimer.

The protein localises to the cytoplasm. The catalysed reaction is tRNA(Pro) + L-proline + ATP = L-prolyl-tRNA(Pro) + AMP + diphosphate. Catalyzes the attachment of proline to tRNA(Pro) in a two-step reaction: proline is first activated by ATP to form Pro-AMP and then transferred to the acceptor end of tRNA(Pro). The polypeptide is Proline--tRNA ligase (Methanococcus maripaludis (strain C7 / ATCC BAA-1331)).